The sequence spans 267 residues: Kallikrein-14 (267 aa).

Residues 1 to 34 form the signal peptide; sequence MSLRVLGSGTWPSAPKMFLLLTALQVLAIAMTQS. Positions 35 to 40 are cleaved as a propeptide — activation peptide; sequence QEDENK. The Peptidase S1 domain occupies 41–265; the sequence is IIGGHTCTRS…YRSWIEETMR (225 aa). Disulfide bonds link cysteine 47–cysteine 180, cysteine 68–cysteine 84, cysteine 159–cysteine 226, cysteine 191–cysteine 205, and cysteine 216–cysteine 241. Residues histidine 83 and aspartate 127 each act as charge relay system in the active site. Serine 220 functions as the Charge relay system in the catalytic mechanism.

This sequence belongs to the peptidase S1 family. Kallikrein subfamily. In terms of processing, proteolytic cleavage of the activation peptide produces the active enzyme. In terms of tissue distribution, highly expressed in CNS, bone marrow and fetal liver. Also expressed in breast, thyroid, kidney, colon, pancreas, spleen, prostate, uterus, small intestine, placenta and skeletal muscle. Among 40 tissues tested, the highest expression is detected in skin followed by breast and prostate (at protein level). Expressed in stratum corneum by sweat ducts and sweat glands and detected in sweat (at protein level).

The protein resides in the secreted. Its subcellular location is the extracellular space. Its activity is regulated as follows. Inhibited by SERPINA1, SERPINC1, SERPINE1, SERPINF2, aprotinin, soybean, trypsin inhibitor and leupeptin. Inhibited by serine protease inhibitor SPINK5. Has an autoproteolytic activity which may have a regulatory effect. Activated by citrate and inhibited by zinc and to a lower extent by manganese. Its function is as follows. Serine-type endopeptidase with a dual trypsin-like and chymotrypsin-like substrate specificity. May activate/inactivate the proteinase-activated receptors F2R, F2RL1 and F2RL3 and other kallikreins including KLK1, KLK3, KLK5 and KLK11. May function in seminal clot liquefaction through direct cleavage of the semenogelin SEMG1 and SEMG2 and activation of KLK3. May function through desmoglein DSG1 cleavage in epidermal desquamation a process by which the most superficial corneocytes are shed from the skin surface. May be involved in several aspects of tumor progression including growth, invasion and angiogenesis. The sequence is that of Kallikrein-14 (KLK14) from Homo sapiens (Human).